The chain runs to 626 residues: Interferon-induced GTP-binding protein MxC (626 aa).

The Dynamin-type G domain maps to 40–313; it reads DLNLPAIAVI…LVEHIAKNVP (274 aa). The interval 50-57 is G1 motif; that stretch reads GDQSSGKS. Residue 50-57 participates in GTP binding; the sequence is GDQSSGKS. A G2 motif region spans residues 75-77; it reads VTR. The interval 151–154 is G3 motif; that stretch reads DLPG. GTP is bound by residues 151–155 and 220–223; these read DLPGI and TKPD. The G4 motif stretch occupies residues 220 to 223; it reads TKPD. A G5 motif region spans residues 252 to 255; that stretch reads KCRG. In terms of domain architecture, GED spans 534–624; sequence LRETAFHLTS…ALPKVVHSAN (91 aa).

The protein belongs to the TRAFAC class dynamin-like GTPase superfamily. Dynamin/Fzo/YdjA family.

It is found in the cytoplasm. This is Interferon-induced GTP-binding protein MxC (mxc) from Danio rerio (Zebrafish).